A 174-amino-acid polypeptide reads, in one-letter code: Crossover junction endodeoxyribonuclease RuvC (174 aa).

Residues aspartate 16, glutamate 76, and aspartate 148 contribute to the active site. Mg(2+) is bound by residues aspartate 16, glutamate 76, and aspartate 148.

This sequence belongs to the RuvC family. As to quaternary structure, homodimer which binds Holliday junction (HJ) DNA. The HJ becomes 2-fold symmetrical on binding to RuvC with unstacked arms; it has a different conformation from HJ DNA in complex with RuvA. In the full resolvosome a probable DNA-RuvA(4)-RuvB(12)-RuvC(2) complex forms which resolves the HJ. The cofactor is Mg(2+).

Its subcellular location is the cytoplasm. The catalysed reaction is Endonucleolytic cleavage at a junction such as a reciprocal single-stranded crossover between two homologous DNA duplexes (Holliday junction).. The RuvA-RuvB-RuvC complex processes Holliday junction (HJ) DNA during genetic recombination and DNA repair. Endonuclease that resolves HJ intermediates. Cleaves cruciform DNA by making single-stranded nicks across the HJ at symmetrical positions within the homologous arms, yielding a 5'-phosphate and a 3'-hydroxyl group; requires a central core of homology in the junction. The consensus cleavage sequence is 5'-(A/T)TT(C/G)-3'. Cleavage occurs on the 3'-side of the TT dinucleotide at the point of strand exchange. HJ branch migration catalyzed by RuvA-RuvB allows RuvC to scan DNA until it finds its consensus sequence, where it cleaves and resolves the cruciform DNA. This Rhodopseudomonas palustris (strain ATCC BAA-98 / CGA009) protein is Crossover junction endodeoxyribonuclease RuvC.